We begin with the raw amino-acid sequence, 208 residues long: Guanylate kinase (208 aa).

One can recognise a Guanylate kinase-like domain in the interval 5-184; sequence GLLIVFSGPS…AAERVKCVIE (180 aa). 12–19 contributes to the ATP binding site; it reads GPSGVGKG.

This sequence belongs to the guanylate kinase family.

Its subcellular location is the cytoplasm. It carries out the reaction GMP + ATP = GDP + ADP. Functionally, essential for recycling GMP and indirectly, cGMP. This is Guanylate kinase from Streptococcus pneumoniae serotype 4 (strain ATCC BAA-334 / TIGR4).